Here is a 176-residue protein sequence, read N- to C-terminus: Flavodoxin 1 (176 aa).

In terms of domain architecture, Flavodoxin-like spans 4 to 165 (TGIFFGSDTG…RVEKWVKQVS (162 aa)).

It belongs to the flavodoxin family. FMN is required as a cofactor.

Low-potential electron donor to a number of redox enzymes (Potential). Involved in the reactivation of inactive cob(II)alamin in methionine synthase. This is Flavodoxin 1 (fldA) from Salmonella typhimurium (strain LT2 / SGSC1412 / ATCC 700720).